Reading from the N-terminus, the 631-residue chain is Golgin subfamily A member 8A (631 aa).

Positions 1-20 (MLPVDGEERKSEGSDTEGDR) are enriched in basic and acidic residues. Disordered stretches follow at residues 1 to 103 (MLPV…QEQA), 127 to 154 (KKQV…LEGQ), 426 to 447 (TSAE…ESSG), and 488 to 520 (PGDS…GAAG). The segment covering 78 to 92 (SLYLSPKSSSASSSL) has biased composition (low complexity). A compositionally biased stretch (polar residues) spans 93-103 (HARQSPCQEQA). A coiled-coil region spans residues 110 to 468 (SIKISRLNDT…REHVEKLELG (359 aa)). Over residues 128-152 (KQVEHQLEEEKKANNEKQKAERELE) the composition is skewed to basic and acidic residues. Over residues 497–510 (PGGGHHQAGPGQGG) the composition is skewed to gly residues. Positions 519 to 631 (AGDGVAACGS…CWAWLPRRRR (113 aa)) are golgi-targeting domain.

This sequence belongs to the GOLGA8 family.

The protein localises to the golgi apparatus. It localises to the golgi stack membrane. Its function is as follows. May be involved in maintaining Golgi structure. This Homo sapiens (Human) protein is Golgin subfamily A member 8A (GOLGA8A).